Reading from the N-terminus, the 88-residue chain is Small ribosomal subunit protein bS16c (88 aa).

This sequence belongs to the bacterial ribosomal protein bS16 family.

Its subcellular location is the plastid. It is found in the chloroplast. This is Small ribosomal subunit protein bS16c from Oenothera elata subsp. hookeri (Hooker's evening primrose).